Consider the following 275-residue polypeptide: Rhamnulose-1-phosphate aldolase (275 aa).

The active site involves E117. Zn(2+)-binding residues include H141, H143, and H212.

Belongs to the aldolase class II family. RhaD subfamily. In terms of assembly, homotetramer. Zn(2+) is required as a cofactor.

It is found in the cytoplasm. The enzyme catalyses L-rhamnulose 1-phosphate = (S)-lactaldehyde + dihydroxyacetone phosphate. It participates in carbohydrate degradation; L-rhamnose degradation; glycerone phosphate from L-rhamnose: step 3/3. Its function is as follows. Catalyzes the reversible cleavage of L-rhamnulose-1-phosphate to dihydroxyacetone phosphate (DHAP) and L-lactaldehyde. This Salmonella paratyphi C (strain RKS4594) protein is Rhamnulose-1-phosphate aldolase.